Here is a 564-residue protein sequence, read N- to C-terminus: Dihydroxy-acid dehydratase (564 aa).

Cysteine 51 serves as a coordination point for [2Fe-2S] cluster. A Mg(2+)-binding site is contributed by aspartate 83. Residue cysteine 124 participates in [2Fe-2S] cluster binding. Residues aspartate 125 and lysine 126 each contribute to the Mg(2+) site. The residue at position 126 (lysine 126) is an N6-carboxylysine. Cysteine 196 provides a ligand contact to [2Fe-2S] cluster. Residue glutamate 448 coordinates Mg(2+). The active-site Proton acceptor is the serine 474.

Belongs to the IlvD/Edd family. Homodimer. [2Fe-2S] cluster is required as a cofactor. Mg(2+) serves as cofactor.

It carries out the reaction (2R)-2,3-dihydroxy-3-methylbutanoate = 3-methyl-2-oxobutanoate + H2O. The enzyme catalyses (2R,3R)-2,3-dihydroxy-3-methylpentanoate = (S)-3-methyl-2-oxopentanoate + H2O. The protein operates within amino-acid biosynthesis; L-isoleucine biosynthesis; L-isoleucine from 2-oxobutanoate: step 3/4. It participates in amino-acid biosynthesis; L-valine biosynthesis; L-valine from pyruvate: step 3/4. Functionally, functions in the biosynthesis of branched-chain amino acids. Catalyzes the dehydration of (2R,3R)-2,3-dihydroxy-3-methylpentanoate (2,3-dihydroxy-3-methylvalerate) into 2-oxo-3-methylpentanoate (2-oxo-3-methylvalerate) and of (2R)-2,3-dihydroxy-3-methylbutanoate (2,3-dihydroxyisovalerate) into 2-oxo-3-methylbutanoate (2-oxoisovalerate), the penultimate precursor to L-isoleucine and L-valine, respectively. The polypeptide is Dihydroxy-acid dehydratase (Pyrobaculum calidifontis (strain DSM 21063 / JCM 11548 / VA1)).